Reading from the N-terminus, the 361-residue chain is Phospho-N-acetylmuramoyl-pentapeptide-transferase (361 aa).

The next 10 membrane-spanning stretches (helical) occupy residues 25-45 (RGILAALTALFLSLWMGPAVI), 73-93 (TMGGSLILLTVTLSVLLWGDL), 98-118 (VWLVLAVMICFGAIGWYDDWI), 139-159 (IFGLAAGLFLYYTADVPAAIT), 168-188 (IALPLVGVSFVVIAYFWIVGF), 200-220 (GLAIMPTVLVACALGVFAYAS), 237-257 (AGELIIICSAIAGAGLGFLWF), 264-284 (VFMGDIGALSLGAVLGTIAVI), 289-309 (MVLVIMGGVFVIETLSVIIQV), and 339-359 (VIVRFWIISVVLVLIGLATLK).

It belongs to the glycosyltransferase 4 family. MraY subfamily. Requires Mg(2+) as cofactor.

The protein localises to the cell inner membrane. The enzyme catalyses UDP-N-acetyl-alpha-D-muramoyl-L-alanyl-gamma-D-glutamyl-meso-2,6-diaminopimeloyl-D-alanyl-D-alanine + di-trans,octa-cis-undecaprenyl phosphate = di-trans,octa-cis-undecaprenyl diphospho-N-acetyl-alpha-D-muramoyl-L-alanyl-D-glutamyl-meso-2,6-diaminopimeloyl-D-alanyl-D-alanine + UMP. It participates in cell wall biogenesis; peptidoglycan biosynthesis. Its function is as follows. Catalyzes the initial step of the lipid cycle reactions in the biosynthesis of the cell wall peptidoglycan: transfers peptidoglycan precursor phospho-MurNAc-pentapeptide from UDP-MurNAc-pentapeptide onto the lipid carrier undecaprenyl phosphate, yielding undecaprenyl-pyrophosphoryl-MurNAc-pentapeptide, known as lipid I. This chain is Phospho-N-acetylmuramoyl-pentapeptide-transferase, found in Xanthomonas oryzae pv. oryzae (strain MAFF 311018).